A 201-amino-acid polypeptide reads, in one-letter code: Small ribosomal subunit protein uS4 (201 aa).

Residues 91–151 (ARLDNVIYRA…DRSRSMLWFD (61 aa)) enclose the S4 RNA-binding domain.

It belongs to the universal ribosomal protein uS4 family. As to quaternary structure, part of the 30S ribosomal subunit. Contacts protein S5. The interaction surface between S4 and S5 is involved in control of translational fidelity.

In terms of biological role, one of the primary rRNA binding proteins, it binds directly to 16S rRNA where it nucleates assembly of the body of the 30S subunit. Its function is as follows. With S5 and S12 plays an important role in translational accuracy. The sequence is that of Small ribosomal subunit protein uS4 from Corynebacterium urealyticum (strain ATCC 43042 / DSM 7109).